We begin with the raw amino-acid sequence, 71 residues long: Protein PSY3 (71 aa).

An N-terminal signal peptide occupies residues 1 to 25 (MGYSSSSRIGLCLFLFFTFALLSSA). Residues 26 to 49 (RISLSFSENEMTVVPERSLMVSTN) constitute a propeptide that is removed on maturation. The segment at 47-71 (STNDYSDPTANGRHDPPRGGRGRRR) is disordered. At tyrosine 51 the chain carries Sulfotyrosine. Proline 63 bears the 4-hydroxyproline mark. An O-linked (Ara...) hydroxyproline glycan is attached at proline 63. A propeptide spanning residues 66–71 (GRGRRR) is cleaved from the precursor.

It belongs to the sulfated-peptide plant hormone family. Post-translationally, the sulfation and the glycosylation are required for full activity.

The protein localises to the secreted. Promotes cellular proliferation and expansion. The polypeptide is Protein PSY3 (PSY3) (Arabidopsis thaliana (Mouse-ear cress)).